Here is a 118-residue protein sequence, read N- to C-terminus: UPF0102 protein Franean1_1156 (118 aa).

The protein belongs to the UPF0102 family.

The polypeptide is UPF0102 protein Franean1_1156 (Parafrankia sp. (strain EAN1pec)).